The chain runs to 192 residues: MMTCPSVPAIPTLWLFSILLLVVSLNAQNKSWDNPICTEGILSVPRGNPAVMTCNISNTFTDVTIQLSANGKDKTIFDKKPQGNFSWRGWELQVQGGQAQLVIKDTQDDHTGIYLWQLHGRQRCYKNITLNILEPSNEDKVPDTTLFTSFPDHAKSSPIEGKPGTLVGVITVIFILGVAGFITFIYYRHRRS.

The N-terminal stretch at Met-1–Ala-27 is a signal peptide. The Extracellular segment spans residues Gln-28–Thr-165. Asn-29, Asn-55, Asn-84, and Asn-127 each carry an N-linked (GlcNAc...) asparagine glycan. The chain crosses the membrane as a helical span at residues Leu-166–Tyr-186. Residues Tyr-187 to Ser-192 lie on the Cytoplasmic side of the membrane.

Belongs to the SECTM family.

It localises to the cell membrane. The protein resides in the secreted. This chain is Secreted and transmembrane protein 1A, found in Mus musculus (Mouse).